A 149-amino-acid polypeptide reads, in one-letter code: Deoxyuridine 5'-triphosphate nucleotidohydrolase (149 aa).

Substrate is bound by residues 70-72, Asn-83, and 87-89; these read RSG and LID.

The protein belongs to the dUTPase family. Mg(2+) is required as a cofactor.

It catalyses the reaction dUTP + H2O = dUMP + diphosphate + H(+). Its pathway is pyrimidine metabolism; dUMP biosynthesis; dUMP from dCTP (dUTP route): step 2/2. Its function is as follows. This enzyme is involved in nucleotide metabolism: it produces dUMP, the immediate precursor of thymidine nucleotides and it decreases the intracellular concentration of dUTP so that uracil cannot be incorporated into DNA. In Blochmanniella pennsylvanica (strain BPEN), this protein is Deoxyuridine 5'-triphosphate nucleotidohydrolase.